The following is a 404-amino-acid chain: Probable tRNA sulfurtransferase (404 aa).

The THUMP domain occupies T60–T165. ATP is bound by residues M183–L184, H208–F209, R265, G287, and Q296.

The protein belongs to the ThiI family.

It localises to the cytoplasm. It carries out the reaction [ThiI sulfur-carrier protein]-S-sulfanyl-L-cysteine + a uridine in tRNA + 2 reduced [2Fe-2S]-[ferredoxin] + ATP + H(+) = [ThiI sulfur-carrier protein]-L-cysteine + a 4-thiouridine in tRNA + 2 oxidized [2Fe-2S]-[ferredoxin] + AMP + diphosphate. It catalyses the reaction [ThiS sulfur-carrier protein]-C-terminal Gly-Gly-AMP + S-sulfanyl-L-cysteinyl-[cysteine desulfurase] + AH2 = [ThiS sulfur-carrier protein]-C-terminal-Gly-aminoethanethioate + L-cysteinyl-[cysteine desulfurase] + A + AMP + 2 H(+). It participates in cofactor biosynthesis; thiamine diphosphate biosynthesis. In terms of biological role, catalyzes the ATP-dependent transfer of a sulfur to tRNA to produce 4-thiouridine in position 8 of tRNAs, which functions as a near-UV photosensor. Also catalyzes the transfer of sulfur to the sulfur carrier protein ThiS, forming ThiS-thiocarboxylate. This is a step in the synthesis of thiazole, in the thiamine biosynthesis pathway. The sulfur is donated as persulfide by IscS. In Streptococcus pneumoniae serotype 2 (strain D39 / NCTC 7466), this protein is Probable tRNA sulfurtransferase.